Consider the following 98-residue polypeptide: Large ribosomal subunit protein uL23 (98 aa).

This sequence belongs to the universal ribosomal protein uL23 family. In terms of assembly, part of the 50S ribosomal subunit. Contacts protein L29, and trigger factor when it is bound to the ribosome.

One of the early assembly proteins it binds 23S rRNA. One of the proteins that surrounds the polypeptide exit tunnel on the outside of the ribosome. Forms the main docking site for trigger factor binding to the ribosome. In Clostridium acetobutylicum (strain ATCC 824 / DSM 792 / JCM 1419 / IAM 19013 / LMG 5710 / NBRC 13948 / NRRL B-527 / VKM B-1787 / 2291 / W), this protein is Large ribosomal subunit protein uL23.